Reading from the N-terminus, the 206-residue chain is MAMVPADADAAAKPPPDVEKPDYSSQNGAPNSAAAAAGGGGGGVVDSVVARWRREDMLDKSPLALHAAAAAFAFVALVLVASNQHGDWMEFDRYQEYRYLLAIAALAFAYSLAQALRHALRMRRGVDPVPTASGRLLDFASDQVVAYLLMSALSAATPITNRMRSAVINRFTDTTAAAISMAFLAFVSLALSAIVSGYKLSKQTYM.

2 stretches are compositionally biased toward low complexity: residues 1–12 and 24–36; these read MAMVPADADAAA and SSQN…AAAA. Residues 1 to 42 form a disordered region; it reads MAMVPADADAAAKPPPDVEKPDYSSQNGAPNSAAAAAGGGGG. Residues 1–60 are Cytoplasmic-facing; it reads MAMVPADADAAAKPPPDVEKPDYSSQNGAPNSAAAAAGGGGGGVVDSVVARWRREDMLDK. Residues 61–81 form a helical membrane-spanning segment; that stretch reads SPLALHAAAAAFAFVALVLVA. Topologically, residues 82–99 are extracellular; it reads SNQHGDWMEFDRYQEYRY. Residues 100–120 form a helical membrane-spanning segment; sequence LLAIAALAFAYSLAQALRHAL. The Cytoplasmic portion of the chain corresponds to 121–138; it reads RMRRGVDPVPTASGRLLD. Residues 139-159 traverse the membrane as a helical segment; that stretch reads FASDQVVAYLLMSALSAATPI. Over 160-174 the chain is Extracellular; that stretch reads TNRMRSAVINRFTDT. A helical membrane pass occupies residues 175–195; that stretch reads TAAAISMAFLAFVSLALSAIV. Residues 196–206 lie on the Cytoplasmic side of the membrane; it reads SGYKLSKQTYM.

Belongs to the Casparian strip membrane proteins (CASP) family. As to quaternary structure, homodimer and heterodimers.

It is found in the cell membrane. This chain is CASP-like protein 4B2, found in Oryza sativa subsp. japonica (Rice).